We begin with the raw amino-acid sequence, 94 residues long: ATP-dependent Clp protease adapter protein ClpS (94 aa).

This sequence belongs to the ClpS family. As to quaternary structure, binds to the N-terminal domain of the chaperone ClpA.

In terms of biological role, involved in the modulation of the specificity of the ClpAP-mediated ATP-dependent protein degradation. The chain is ATP-dependent Clp protease adapter protein ClpS from Thermosynechococcus vestitus (strain NIES-2133 / IAM M-273 / BP-1).